Consider the following 258-residue polypeptide: Small ribosomal subunit protein mS23 (258 aa).

This sequence belongs to the mitochondrion-specific ribosomal protein mS23 family. As to quaternary structure, component of the mitochondrial small ribosomal subunit.

It localises to the mitochondrion. The chain is Small ribosomal subunit protein mS23 from Aspergillus fumigatus (strain CBS 144.89 / FGSC A1163 / CEA10) (Neosartorya fumigata).